Reading from the N-terminus, the 261-residue chain is Cytochrome c oxidase subunit 3 (261 aa).

Over 1–15 (MTHQTHAYHMVNPSP) the chain is Mitochondrial matrix. Residues 16–34 (WPLTGALSALLMTSGLAMW) form a helical membrane-spanning segment. At 35 to 40 (FHFNST) the chain is on the mitochondrial intermembrane side. Residues 41 to 66 (ILLMIGLTTNTLTMYQWWRDVIREST) traverse the membrane as a helical segment. Residues 67–72 (FQGHHT) lie on the Mitochondrial matrix side of the membrane. The helical transmembrane segment at 73–105 (PTVQKGLRYGMILFIISEVLFFTGFFWAFYHSS) threads the bilayer. The Mitochondrial intermembrane segment spans residues 106–128 (LAPTPELGGCWPPTGIHPLNPLE). Residues 129 to 152 (VPLLNTSVLLASGVSITWAHHSLM) traverse the membrane as a helical segment. Residues 153 to 155 (EGN) lie on the Mitochondrial matrix side of the membrane. The chain crosses the membrane as a helical span at residues 156 to 183 (RYPMLQALFITIALGVYFTLLQASEYYE). Residues 184 to 190 (APFTISD) lie on the Mitochondrial intermembrane side of the membrane. A helical transmembrane segment spans residues 191-223 (GIYGSTFFVATGFHGLHVIIGSTFLIVCFFRQL). Residues 224-232 (KFHFTSNHH) lie on the Mitochondrial matrix side of the membrane. The chain crosses the membrane as a helical span at residues 233–256 (FGFEAAAWYWHFVDVVWLFLYVSI). Residues 257-261 (YWWGS) are Mitochondrial intermembrane-facing.

This sequence belongs to the cytochrome c oxidase subunit 3 family. As to quaternary structure, component of the cytochrome c oxidase (complex IV, CIV), a multisubunit enzyme composed of 14 subunits. The complex is composed of a catalytic core of 3 subunits MT-CO1, MT-CO2 and MT-CO3, encoded in the mitochondrial DNA, and 11 supernumerary subunits COX4I, COX5A, COX5B, COX6A, COX6B, COX6C, COX7A, COX7B, COX7C, COX8 and NDUFA4, which are encoded in the nuclear genome. The complex exists as a monomer or a dimer and forms supercomplexes (SCs) in the inner mitochondrial membrane with NADH-ubiquinone oxidoreductase (complex I, CI) and ubiquinol-cytochrome c oxidoreductase (cytochrome b-c1 complex, complex III, CIII), resulting in different assemblies (supercomplex SCI(1)III(2)IV(1) and megacomplex MCI(2)III(2)IV(2)).

It localises to the mitochondrion inner membrane. It carries out the reaction 4 Fe(II)-[cytochrome c] + O2 + 8 H(+)(in) = 4 Fe(III)-[cytochrome c] + 2 H2O + 4 H(+)(out). Component of the cytochrome c oxidase, the last enzyme in the mitochondrial electron transport chain which drives oxidative phosphorylation. The respiratory chain contains 3 multisubunit complexes succinate dehydrogenase (complex II, CII), ubiquinol-cytochrome c oxidoreductase (cytochrome b-c1 complex, complex III, CIII) and cytochrome c oxidase (complex IV, CIV), that cooperate to transfer electrons derived from NADH and succinate to molecular oxygen, creating an electrochemical gradient over the inner membrane that drives transmembrane transport and the ATP synthase. Cytochrome c oxidase is the component of the respiratory chain that catalyzes the reduction of oxygen to water. Electrons originating from reduced cytochrome c in the intermembrane space (IMS) are transferred via the dinuclear copper A center (CU(A)) of subunit 2 and heme A of subunit 1 to the active site in subunit 1, a binuclear center (BNC) formed by heme A3 and copper B (CU(B)). The BNC reduces molecular oxygen to 2 water molecules using 4 electrons from cytochrome c in the IMS and 4 protons from the mitochondrial matrix. The sequence is that of Cytochrome c oxidase subunit 3 (MT-CO3) from Raphicerus melanotis (Cape grysbok).